We begin with the raw amino-acid sequence, 501 residues long: Glycogen synthase 1 (501 aa).

Lys18 serves as a coordination point for ADP-alpha-D-glucose.

This sequence belongs to the glycosyltransferase 1 family. Bacterial/plant glycogen synthase subfamily.

It catalyses the reaction [(1-&gt;4)-alpha-D-glucosyl](n) + ADP-alpha-D-glucose = [(1-&gt;4)-alpha-D-glucosyl](n+1) + ADP + H(+). Its pathway is glycan biosynthesis; glycogen biosynthesis. Its function is as follows. Synthesizes alpha-1,4-glucan chains using ADP-glucose. The protein is Glycogen synthase 1 of Geobacter sulfurreducens (strain ATCC 51573 / DSM 12127 / PCA).